The primary structure comprises 296 residues: Cbb3-type cytochrome c oxidase subunit CcoP (296 aa).

Residues 1–31 are Cytoplasmic-facing; sequence MAQNYKDELSGVETTGHEWDGLRELNNPLPK. A helical transmembrane segment spans residues 32–52; sequence WWLYLFYVCIAWAMVYYVFYP. The Periplasmic portion of the chain corresponds to 53–296; the sequence is AWPLGKTYTK…VYVHNLGGGK (244 aa). Cytochrome c domains lie at 108 to 200 and 207 to 293; these read FAMA…LSLN and GKVA…HNLG. Positions 121, 124, 125, 175, 220, 223, 224, and 270 each coordinate heme c.

Belongs to the CcoP / FixP family. In terms of assembly, component of the cbb3-type cytochrome c oxidase at least composed of CcoN, CcoO, CcoQ and CcoP. Requires heme c as cofactor.

It is found in the cell inner membrane. It participates in energy metabolism; oxidative phosphorylation. Functionally, C-type cytochrome. Part of the cbb3-type cytochrome c oxidase complex. CcoP subunit is required for transferring electrons from donor cytochrome c via its heme groups to CcoO subunit. From there, electrons are shuttled to the catalytic binuclear center of CcoN subunit where oxygen reduction takes place. The complex also functions as a proton pump. This Azospirillum sp. (strain B510) protein is Cbb3-type cytochrome c oxidase subunit CcoP.